The sequence spans 199 residues: Recombination protein RecR (199 aa).

Residues 56-71 (CATCGNVAQEEQCNIC) form a C4-type zinc finger. The Toprim domain occupies 79–174 (SVICVVEEPK…KVTRLASGLP (96 aa)).

Belongs to the RecR family.

In terms of biological role, may play a role in DNA repair. It seems to be involved in an RecBC-independent recombinational process of DNA repair. It may act with RecF and RecO. This Streptomyces coelicolor (strain ATCC BAA-471 / A3(2) / M145) protein is Recombination protein RecR.